A 550-amino-acid polypeptide reads, in one-letter code: C-type lectin domain family 4 member F (550 aa).

Residues 1–42 are Cytoplasmic-facing; it reads MKEAELNRDVAKFCTDNQCVILQPQGLGPKSAAPMAPRTLRH. A helical; Signal-anchor for type II membrane protein membrane pass occupies residues 43–69; that stretch reads VQAIVALVVVTVFFSLLALFVVVLQPW. At 70 to 550 the chain is on the extracellular side; it reads RQKQNEDHPV…DWSVARTDQS (481 aa). 6 N-linked (GlcNAc...) asparagine glycosylation sites follow: N87, N93, N115, N132, N209, and N255. The C-type lectin domain occupies 438–538; the sequence is NFCVSQGAHL…GTAYNWVCKK (101 aa). Cystine bridges form between C440/C536 and C516/C528.

As to expression, kupffer cells.

It localises to the membrane. In terms of biological role, receptor with an affinity for galactose and fucose. Could be involved in endocytosis. This is C-type lectin domain family 4 member F (Clec4f) from Rattus norvegicus (Rat).